The sequence spans 195 residues: MTDPHLNTPQVSTSPTFERSQDFLNIDEPPCAQETPSVSTFNLPGPSAPAQSVDKPVPMIRRRSTNYMDALNSREQARERESSIGEHAPGAERRSSGPMDFQNTIHNMQYRTTNDSDLSHAGVDMGDSISHTPICSRAGNRPIFKNSYLDNNSNGNSARVPHGSPPQLGTRRKSSFKYEDFKKDIYNQLHMFGEK.

The span at 1-18 (MTDPHLNTPQVSTSPTFE) shows a compositional bias: polar residues. Residues 1-101 (MTDPHLNTPQ…ERRSSGPMDF (101 aa)) are disordered. Ser64 carries the post-translational modification Phosphoserine. Thr65 carries the phosphothreonine modification. The segment covering 75–95 (EQARERESSIGEHAPGAERRS) has biased composition (basic and acidic residues). Residues Ser95 and Ser96 each carry the phosphoserine modification. Thr132 carries the post-translational modification Phosphothreonine. Residues 146-175 (NSYLDNNSNGNSARVPHGSPPQLGTRRKSS) form a disordered region. Residues 148–157 (YLDNNSNGNS) show a composition bias toward polar residues. Ser164 bears the Phosphoserine mark.

In terms of assembly, interacts with GDB1.

It localises to the cytoplasm. Functionally, acts as an inhibitor of GDB1, enhancing the ability of cells to store glucose as glycogen. This chain is Inhibitor of glycogen debranching 1 (IGD1), found in Saccharomyces cerevisiae (strain ATCC 204508 / S288c) (Baker's yeast).